Here is a 29-residue protein sequence, read N- to C-terminus: Protamine-like protein (29 aa).

The tract at residues 1–29 is disordered; sequence MRSFDQGSTRAPARERCRRQRPEGRSAQR. Residues 12–29 show a composition bias toward basic and acidic residues; that stretch reads PARERCRRQRPEGRSAQR.

The polypeptide is Protamine-like protein (tpr) (Escherichia coli (strain K12)).